Here is a 566-residue protein sequence, read N- to C-terminus: Ubiquitin carboxyl-terminal hydrolase 21 (566 aa).

Basic and acidic residues-rich tracts occupy residues 1-14 (MPQA…RTRE) and 58-70 (PPDE…ELGR). 2 disordered regions span residues 1 to 103 (MPQA…LPLP) and 146 to 169 (PEPP…PPTL). 2 stretches are compositionally biased toward low complexity: residues 71–81 (GRTSGSRPRGP) and 151–160 (LRRSTSLRRL). The Nuclear export signal motif lies at 134-152 (ELGAALSRLALRPEPPTLR). In terms of domain architecture, USP spans 212–559 (VGLRNLGNTC…EGYVLFYQLM (348 aa)). The Nucleophile role is filled by cysteine 221. Residues 324-349 (APPILASGPVPSPPRRGGGALHEEPE) are disordered. Cysteine 385, cysteine 388, cysteine 438, and cysteine 441 together coordinate Zn(2+). Histidine 519 functions as the Proton acceptor in the catalytic mechanism.

It belongs to the peptidase C19 family. USP21 subfamily. As to quaternary structure, interacts with BEND3.

Its subcellular location is the cytoplasm. The protein resides in the nucleus. The catalysed reaction is Thiol-dependent hydrolysis of ester, thioester, amide, peptide and isopeptide bonds formed by the C-terminal Gly of ubiquitin (a 76-residue protein attached to proteins as an intracellular targeting signal).. Functionally, deubiquitinates histone H2A, a specific tag for epigenetic transcriptional repression, thereby acting as a coactivator. Deubiquitination of histone H2A releaves the repression of di- and trimethylation of histone H3 at 'Lys-4', resulting in regulation of transcriptional initiation. Regulates gene expression via histone H2A deubiquitination. Deubiquitinates BAZ2A/TIP5 leading to its stabilization. Also capable of removing NEDD8 from NEDD8 conjugates but has no effect on Sentrin-1 conjugates. Also acts as a negative regulator of the ribosome quality control (RQC) by mediating deubiquitination of 40S ribosomal proteins RPS10/eS10 and RPS20/uS10, thereby antagonizing ZNF598-mediated 40S ubiquitination. The sequence is that of Ubiquitin carboxyl-terminal hydrolase 21 from Mus musculus (Mouse).